The sequence spans 101 residues: Small ribosomal subunit protein uS14 (101 aa).

The protein belongs to the universal ribosomal protein uS14 family. In terms of assembly, part of the 30S ribosomal subunit. Contacts proteins S3 and S10.

Binds 16S rRNA, required for the assembly of 30S particles and may also be responsible for determining the conformation of the 16S rRNA at the A site. The polypeptide is Small ribosomal subunit protein uS14 (Dinoroseobacter shibae (strain DSM 16493 / NCIMB 14021 / DFL 12)).